Reading from the N-terminus, the 433-residue chain is Glutamate-1-semialdehyde 2,1-aminomutase (433 aa).

K273 bears the N6-(pyridoxal phosphate)lysine mark.

This sequence belongs to the class-III pyridoxal-phosphate-dependent aminotransferase family. HemL subfamily. As to quaternary structure, homodimer. The cofactor is pyridoxal 5'-phosphate.

It is found in the cytoplasm. It carries out the reaction (S)-4-amino-5-oxopentanoate = 5-aminolevulinate. Its pathway is porphyrin-containing compound metabolism; protoporphyrin-IX biosynthesis; 5-aminolevulinate from L-glutamyl-tRNA(Glu): step 2/2. It participates in porphyrin-containing compound metabolism; chlorophyll biosynthesis. This chain is Glutamate-1-semialdehyde 2,1-aminomutase, found in Gloeothece citriformis (strain PCC 7424) (Cyanothece sp. (strain PCC 7424)).